Here is a 932-residue protein sequence, read N- to C-terminus: Protein hir1 (932 aa).

WD repeat units lie at residues 16–55, 72–111, 132–171, 174–213, 222–265, 268–316, and 320–361; these read GHRL…RENE, THTG…PGLG, GHDN…RLKR, AHQS…IEKT, PLST…SEIN, GHEG…PLLS, and VFQK…DMVS. Polar residues-rich tracts occupy residues 405–426 and 441–453; these read STTD…QKTP and TVDT…SKEQ. Disordered regions lie at residues 405–470 and 498–520; these read STTD…NEIP and TPST…LPPQ. The span at 498–507 shows a compositional bias: low complexity; that stretch reads TPSTSRLAST.

This sequence belongs to the WD repeat HIR1 family. As to quaternary structure, interacts with his3 and slm9.

Its subcellular location is the cytoplasm. It localises to the nucleus. Probably required for replication-independent chromatin assembly. Required for transcriptional silencing in the outer repeat (otr) centromeric repeats and the Tf2 long terminal repeat retrotransposons. Repressor of histone gene transcription in G1 arrested cells. Required for repression of htb1 gene expression outside of S phase. The polypeptide is Protein hir1 (hip1) (Schizosaccharomyces pombe (strain 972 / ATCC 24843) (Fission yeast)).